A 131-amino-acid polypeptide reads, in one-letter code: Transcription antitermination protein NusB (131 aa).

This sequence belongs to the NusB family.

In terms of biological role, involved in transcription antitermination. Required for transcription of ribosomal RNA (rRNA) genes. Binds specifically to the boxA antiterminator sequence of the ribosomal RNA (rrn) operons. This is Transcription antitermination protein NusB from Campylobacter concisus (strain 13826).